A 453-amino-acid chain; its full sequence is Glutamyl-tRNA(Gln) amidotransferase subunit A (453 aa).

Residues Lys56 and Ser131 each act as charge relay system in the active site. Ser155 (acyl-ester intermediate) is an active-site residue.

It belongs to the amidase family. GatA subfamily. As to quaternary structure, heterotrimer of A, B and C subunits.

It catalyses the reaction L-glutamyl-tRNA(Gln) + L-glutamine + ATP + H2O = L-glutaminyl-tRNA(Gln) + L-glutamate + ADP + phosphate + H(+). In terms of biological role, allows the formation of correctly charged Gln-tRNA(Gln) through the transamidation of misacylated Glu-tRNA(Gln) in organisms which lack glutaminyl-tRNA synthetase. The reaction takes place in the presence of glutamine and ATP through an activated gamma-phospho-Glu-tRNA(Gln). The protein is Glutamyl-tRNA(Gln) amidotransferase subunit A of Campylobacter fetus subsp. fetus (strain 82-40).